The following is a 249-amino-acid chain: Probable phosphatase Spea_1436 (249 aa).

Residues His8, His10, His16, His41, Glu74, His102, His132, Asp193, and His195 each coordinate Zn(2+).

It belongs to the PHP family. Zn(2+) is required as a cofactor.

In Shewanella pealeana (strain ATCC 700345 / ANG-SQ1), this protein is Probable phosphatase Spea_1436.